A 340-amino-acid chain; its full sequence is ATPase BagA (340 aa).

ATP is bound by residues Gly-31, Gly-33, Lys-34, Ser-35, Thr-36, Asn-240, Pro-316, and Val-318.

The protein belongs to the arsA ATPase family. BagA/BagB subfamily. In terms of assembly, forms a heterodimer composed of BagA and BagB. Interacts with Rv1509. Also interacts with a large number of proteins, including proteins required for mycolic acid biosynthesis.

Its activity is regulated as follows. The ATPase activity of the BagAB complex is not stimulated by antimonite, an arsenite substitute, suggesting that BagAB is not a transporter for this family of elements. Component of the heterodimeric BagAB ATPase complex, whose two subunits are actively involved in ATP hydrolysis. The ATPase activity is required to mediate resistance against nitric oxide (NO) and elevated levels of glycerol. In Mycobacterium tuberculosis (strain ATCC 25618 / H37Rv), this protein is ATPase BagA.